A 721-amino-acid chain; its full sequence is Cell wall protein RBT1 (721 aa).

Positions 1–20 (MRFATAQLAALAYYILSTEA) are cleaved as a signal peptide. The 224-residue stretch at 55-278 (GSKNKREAEI…DCQCDTPSPS (224 aa)) folds into the Flo11 domain. Disordered regions lie at residues 278-410 (STTT…LTTT), 453-510 (LTET…TVTE), and 555-666 (TPAT…ALVS). Residues 454 to 499 (TETTPVPSSVDSTSVTSAPETTPESTAPESSAPESSAPESSAPVTE) are compositionally biased toward low complexity. The span at 500-510 (TPTGPVSTVTE) shows a compositional bias: polar residues. Low complexity-rich tracts occupy residues 555–575 (TPAT…VPAT) and 584–663 (SSAP…KTSA). Ser696 is lipidated: GPI-anchor amidated serine. Residues 697–721 (SFEGAGNNMRLTYGAAIIGLAAFLI) constitute a propeptide, removed in mature form.

This sequence belongs to the HWP1 family. In terms of processing, the GPI-anchor is attached to the protein in the endoplasmic reticulum and serves to target the protein to the cell surface. There, the glucosamine-inositol phospholipid moiety is cleaved off and the GPI-modified mannoprotein is covalently attached via its lipidless GPI glycan remnant to the 1,6-beta-glucan of the outer cell wall layer.

The protein resides in the secreted. Its subcellular location is the cell wall. The protein localises to the membrane. In terms of biological role, GPI-anchored cell wall protein required for mating efficiency, biofilm formation, and virulence. Involved in normal disseminated infection, but not in intestinal colonization. This chain is Cell wall protein RBT1 (RBT1), found in Candida albicans (strain SC5314 / ATCC MYA-2876) (Yeast).